A 67-amino-acid polypeptide reads, in one-letter code: Large ribosomal subunit protein uL30 (67 aa).

Belongs to the universal ribosomal protein uL30 family. In terms of assembly, part of the 50S ribosomal subunit.

The chain is Large ribosomal subunit protein uL30 from Sorangium cellulosum (strain So ce56) (Polyangium cellulosum (strain So ce56)).